The chain runs to 353 residues: MASGKMRIVVLFGGRSAEHDVSVLSATNVMNALDPAKYEAVPVFVTRAGQWLLSRFVNGALEKPSSGAELCLVPGGCGRAIVVPDAGAPYEADKIDIIFPVLHGLHGEDGAVQGLAQVARVPLAGCGIPGSANALDKDIAKRLVNEAGLSTAKSVTITREEVPAFSALEQALGLPIFIKPARQGSSVGVHKVVTEADYQAAMSDGFIYDDKLLAEEFIQAREVECGVLEDEGGALFVSRAGEIVPAESHCFYSYDAKYIDADGTEIKVPAELPEQVENEIRAIAAKAFRVLGCDSMARVDFFVTADRRIVLNEINTIPGFTDMSMYFKVMAVSGVSYPEIINRLVAHGLARGS.

One can recognise an ATP-grasp domain in the interval 141 to 346; that stretch reads KRLVNEAGLS…YPEIINRLVA (206 aa). 169–224 contacts ATP; sequence EQALGLPIFIKPARQGSSVGVHKVVTEADYQAAMSDGFIYDDKLLAEEFIQAREVE. Residues aspartate 300, glutamate 313, and asparagine 315 each contribute to the Mg(2+) site.

Belongs to the D-alanine--D-alanine ligase family. Requires Mg(2+) as cofactor. The cofactor is Mn(2+).

It localises to the cytoplasm. The catalysed reaction is 2 D-alanine + ATP = D-alanyl-D-alanine + ADP + phosphate + H(+). The protein operates within cell wall biogenesis; peptidoglycan biosynthesis. Functionally, cell wall formation. The protein is D-alanine--D-alanine ligase A of Brucella melitensis biotype 1 (strain ATCC 23456 / CCUG 17765 / NCTC 10094 / 16M).